The sequence spans 198 residues: Small ribosomal subunit protein uS11 (198 aa).

2 stretches are compositionally biased toward low complexity: residues 1-11 (MSGTEAGAGEP) and 19-58 (EAAQ…TAQP). 2 disordered regions span residues 1-72 (MSGT…TPAD) and 178-198 (DVTP…GRRV). A compositionally biased stretch (basic residues) spans 187 to 198 (TRKKGGKRGRRV).

Belongs to the universal ribosomal protein uS11 family. Part of the 30S ribosomal subunit.

Its function is as follows. Located on the platform of the 30S subunit. The chain is Small ribosomal subunit protein uS11 from Cenarchaeum symbiosum (strain A).